The following is a 342-amino-acid chain: uncharacterized protein (342 aa).

Helical transmembrane passes span 35–55 (YFRVSLVLLTLLIISLVWCFS), 134–154 (LLFLPSSVLSLSLIFSLIIYF), and 161–180 (LFITRCNSTLYLFNIYYCFS). 2 disordered regions span residues 198–220 (SSDNYSNYQQQPQQQPQQQQQYN) and 311–342 (IINNNNNNNNNNNINNSAYSNFNNSNGYNYTN).

The protein resides in the membrane. This is an uncharacterized protein from Dictyostelium discoideum (Social amoeba).